Here is a 60-residue protein sequence, read N- to C-terminus: Prophage outer membrane lipoprotein RzoD (60 aa).

The N-terminal stretch at methionine 1 to glycine 19 is a signal peptide. The N-palmitoyl cysteine moiety is linked to residue cysteine 20. Residue cysteine 20 is the site of S-diacylglycerol cysteine attachment.

The protein belongs to the lambdalikevirus o-spanin family. As to quaternary structure, homodimer; disulfide-linked. Interacts (via C-terminus) with RZ (via C-terminus). Part of the spanin complex which spans the entire periplasmic space. The spanin complex is composed of spanin, inner membrane subunit and spanin, outer membrane subunit.

The protein resides in the cell outer membrane. Component of the spanin complex that disrupts the outer membrane and causes cell lysis during virus exit. The spanin complex conducts the final step in cell lysis by disrupting the outer membrane after holin and endolysin action have permeabilized the inner membrane and degraded the host peptidoglycans. The sequence is that of Prophage outer membrane lipoprotein RzoD (rzoD) from Escherichia coli (strain K12).